Here is a 180-residue protein sequence, read N- to C-terminus: Bifunctional protein PyrR (180 aa).

Residues 101–113 (VILVDDVLYTGRT) carry the PRPP-binding motif.

The protein belongs to the purine/pyrimidine phosphoribosyltransferase family. PyrR subfamily. As to quaternary structure, homodimer and homohexamer; in equilibrium.

The catalysed reaction is UMP + diphosphate = 5-phospho-alpha-D-ribose 1-diphosphate + uracil. In terms of biological role, regulates transcriptional attenuation of the pyrimidine nucleotide (pyr) operon by binding in a uridine-dependent manner to specific sites on pyr mRNA. This disrupts an antiterminator hairpin in the RNA and favors formation of a downstream transcription terminator, leading to a reduced expression of downstream genes. Its function is as follows. Also displays a weak uracil phosphoribosyltransferase activity which is not physiologically significant. This is Bifunctional protein PyrR from Bacillus thuringiensis subsp. konkukian (strain 97-27).